We begin with the raw amino-acid sequence, 37 residues long: Large ribosomal subunit protein bL36 (37 aa).

The protein belongs to the bacterial ribosomal protein bL36 family.

The chain is Large ribosomal subunit protein bL36 from Mycoplasma genitalium (strain ATCC 33530 / DSM 19775 / NCTC 10195 / G37) (Mycoplasmoides genitalium).